A 464-amino-acid chain; its full sequence is ATP synthase subunit beta (464 aa).

Position 152-159 (152-159) interacts with ATP; sequence GGAGVGKT.

Belongs to the ATPase alpha/beta chains family. F-type ATPases have 2 components, CF(1) - the catalytic core - and CF(0) - the membrane proton channel. CF(1) has five subunits: alpha(3), beta(3), gamma(1), delta(1), epsilon(1). CF(0) has three main subunits: a(1), b(2) and c(9-12). The alpha and beta chains form an alternating ring which encloses part of the gamma chain. CF(1) is attached to CF(0) by a central stalk formed by the gamma and epsilon chains, while a peripheral stalk is formed by the delta and b chains.

The protein resides in the cell membrane. The enzyme catalyses ATP + H2O + 4 H(+)(in) = ADP + phosphate + 5 H(+)(out). Produces ATP from ADP in the presence of a proton gradient across the membrane. The catalytic sites are hosted primarily by the beta subunits. This Ureaplasma parvum serovar 3 (strain ATCC 27815 / 27 / NCTC 11736) protein is ATP synthase subunit beta.